The following is a 301-amino-acid chain: GTPase Era (301 aa).

In terms of domain architecture, Era-type G spans 7–175; sequence YCGFIAIVGR…AAIVRKHLPE (169 aa). The segment at 15–22 is G1; the sequence is GRPNVGKS. 15–22 is a GTP binding site; it reads GRPNVGKS. The tract at residues 41–45 is G2; the sequence is QTTRH. Positions 62–65 are G3; the sequence is DTPG. GTP is bound by residues 62-66 and 124-127; these read DTPGL and NKVD. A G4 region spans residues 124 to 127; that stretch reads NKVD. The G5 stretch occupies residues 154 to 156; it reads ISA. Positions 206–283 constitute a KH type-2 domain; it reads LGAELPYSVT…HLELWVKVKS (78 aa).

It belongs to the TRAFAC class TrmE-Era-EngA-EngB-Septin-like GTPase superfamily. Era GTPase family. Monomer.

Its subcellular location is the cytoplasm. The protein resides in the cell inner membrane. Functionally, an essential GTPase that binds both GDP and GTP, with rapid nucleotide exchange. Plays a role in 16S rRNA processing and 30S ribosomal subunit biogenesis and possibly also in cell cycle regulation and energy metabolism. This chain is GTPase Era, found in Escherichia coli (strain K12 / DH10B).